A 242-amino-acid polypeptide reads, in one-letter code: Ribonuclease PH (242 aa).

Phosphate-binding positions include Arg-89 and 127–129 (GTR).

It belongs to the RNase PH family. Homohexameric ring arranged as a trimer of dimers.

The catalysed reaction is tRNA(n+1) + phosphate = tRNA(n) + a ribonucleoside 5'-diphosphate. Phosphorolytic 3'-5' exoribonuclease that plays an important role in tRNA 3'-end maturation. Removes nucleotide residues following the 3'-CCA terminus of tRNAs; can also add nucleotides to the ends of RNA molecules by using nucleoside diphosphates as substrates, but this may not be physiologically important. Probably plays a role in initiation of 16S rRNA degradation (leading to ribosome degradation) during starvation. This Neisseria gonorrhoeae (strain ATCC 700825 / FA 1090) protein is Ribonuclease PH.